The following is a 3680-amino-acid chain: Dystrophin (3680 aa).

An actin-binding region spans residues 1–237 (MLWWEEVEDC…ILMYITSLFQ (237 aa)). Calponin-homology (CH) domains are found at residues 15-119 (DVQK…LHWQ) and 134-240 (TNSE…QVLP). The ANK2- and ANK-3 binding stretch occupies residues 63-72 (PKEKGSTRVH). The span at 310–323 (TSDPTRSPLPSQHL) shows a compositional bias: polar residues. The disordered stretch occupies residues 310–332 (TSDPTRSPLPSQHLETPEDKSFG). Spectrin repeat units follow at residues 340–448 (ANLD…NLHK), 449–557 (VLMD…LLQD), 560–668 (LKWQ…QISQ), 720–829 (EIRK…WLEY), 831–935 (NNII…ELQT), 944–1047 (RYQE…KLEE), 1050–1156 (AKLR…ALKG), 1159–1265 (DKTV…TLEE), 1268–1369 (ACWH…LLEQ), 1370–1465 (SIQS…LFQK), 1470–1570 (EQRL…QLEK), 1573–1678 (KLSR…LLLE), 1681–1780 (KHME…KASI), 1781–1876 (PLKE…KALE), 1879–1981 (HQWY…TVHE), 1994–2103 (EISY…RFDR), 2106–2210 (EKWR…RLEE), 2213–2320 (NILS…EIEA), 2321–2418 (HVKD…LRAK), 2470–2572 (FNRA…QLTE), 2575–2681 (KDST…ALEE), 2684–2797 (RLLQ…HLEA), 2803–2925 (KRLH…RKID), and 2930–3035 (RLQE…QLHE). Residues 1418-1915 (DLTSHEISLE…PEPRDERKIK (498 aa)) form an interaction with SYNM region. The WW domain occupies 3050–3083 (TSVQGPWERAISPNKVPYYINHETQTTCWDHPKM). The interaction with SYNM stretch occupies residues 3053–3403 (QGPWERAISP…TVLEGDNMET (351 aa)). The ZZ-type; degenerate zinc finger occupies 3303-3359 (KHQAKCNICKECPIIGFRYRSLKHFNYDICQSCFFSGRVAKGHKMHYPMVEYCTPTT). Zn(2+) contacts are provided by C3308, C3311, C3332, and C3335. Positions 3461 to 3513 (DDEHLLIQHYWRSLNQESPLSQPRSPAQILISLESEERGELERILADLEGRNR) are binds to SNTB1. S3478, S3485, and S3495 each carry phosphoserine. 2 disordered regions span residues 3524–3549 (QQHE…QSPR) and 3595–3680 (PQAE…EDTM). 2 stretches are compositionally biased toward polar residues: residues 3602–3621 (NGTT…SSQP) and 3658–3668 (LNHSFPSSRGR). 6 positions are modified to phosphoserine: S3607, S3608, S3612, S3618, S3619, and S3661.

Interacts with SYNM. Interacts with the syntrophins SNTG1 and SNTG2. Interacts with KRT19. Component of the dystrophin-associated glycoprotein complex which is composed of three subcomplexes: a cytoplasmic complex comprised of DMD (or UTRN), DTNA and a number of syntrophins, such as SNTB1, SNTB2, SNTG1 and SNTG2, the transmembrane dystroglycan complex, and the sarcoglycan-sarcospan complex. Interacts with DAG1 (betaDAG1) with DMD; the interaction is inhibited by phosphorylation on the PPXY motif of DAG1. Interacts with SYNM; SNTA1 and SNTB1. Interacts with CMYA5. Directly interacts with ANK2 and ANK3; these interactions do not interfere with betaDAG1-binding and are necessary for proper localization in muscle cells. Identified in a dystroglycan complex that contains at least PRX, DRP2, UTRN, DMD and DAG1. Interacts with DTNB. Interacts with PGM5; the interaction is direct. Interacts with NOS1; localizes NOS1 to sarcolemma in muscle cells.

Its subcellular location is the cell membrane. It localises to the sarcolemma. The protein resides in the cytoplasm. The protein localises to the cytoskeleton. It is found in the postsynaptic cell membrane. Its function is as follows. Anchors the extracellular matrix to the cytoskeleton via F-actin. Ligand for dystroglycan. Component of the dystrophin-associated glycoprotein complex which accumulates at the neuromuscular junction (NMJ) and at a variety of synapses in the peripheral and central nervous systems and has a structural function in stabilizing the sarcolemma. Also implicated in signaling events and synaptic transmission. The sequence is that of Dystrophin (DMD) from Canis lupus familiaris (Dog).